The primary structure comprises 92 residues: Parbolysin P7 (92 aa).

Intrachain disulfides connect Cys-15/Cys-36, Cys-21/Cys-32, and Cys-46/Cys-59.

It belongs to the worm cytolysin family. As to expression, localized within the skin and proboscis and are most readily isolated from body mucus secretions.

It is found in the secreted. Cytolysin that shows hemolytic activity (on bovine erythrocytes, HC(50)=5.75 mg/ml). This hemolytic activity is completely inhibited by small unilamelar vesicles composed of PC/PG, PC/PI and PC/PS in 1:1 molar ratios (with at least 100 mg/ml concentration). The polypeptide is Parbolysin P7 (Parborlasia corrugatus (Antarctic nemertean worm)).